A 323-amino-acid chain; its full sequence is Chitin-binding lectin 1 (323 aa).

A signal peptide spans 1-22 (MKETAISVLALLTLFLLEVVSA). 4-hydroxyproline is present on residues Pro50, Pro51, Pro53, and Pro55. Residues Pro50, Pro51, Pro53, and Pro55 are each glycosylated (O-linked (Ara...) hydroxyproline). Chitin-binding type-1 domains lie at 58–101 (YPQC…QCPG) and 105–149 (EGRC…QCKL). Cystine bridges form between Cys61-Cys77, Cys70-Cys83, Cys76-Cys90, Cys95-Cys99, Cys108-Cys125, Cys117-Cys131, Cys124-Cys138, and Cys143-Cys147. Residues Ser78, Trp80, Trp82, and Tyr89 each coordinate chitin. The extensin-like stretch occupies residues 150–210 (PSPPPPPPPP…PPPPPPALPY (61 aa)). A glycan (O-linked (Gal) serine) is linked at Ser151. A run of 10 repeats spans residues 151–159 (SPPPPPPPP), 160–164 (SPPPP), 165–167 (SPP), 168–172 (SPPPP), 173–180 (SPPPPPPP), 181–185 (SPPPP), 186–190 (SPPPP), 191–192 (SP), 193–198 (SPPPPP), and 200–206 (SPPPPPP). The segment at 151–206 (SPPPPPPPPSPPPPSPPSPPPPSPPPPPPPSPPPPSPPPPSPSPPPPPASPPPPPP) is 10 X approximate repeats of S-P-P-P-P. Residues Pro152, Pro153, Pro154, Pro155, Pro156, Pro157, Pro158, and Pro159 each carry the 4-hydroxyproline modification. 8 O-linked (Ara...) hydroxyproline glycosylation sites follow: Pro152, Pro153, Pro154, Pro155, Pro156, Pro157, Pro158, and Pro159. A disordered region spans residues 154-203 (PPPPPPSPPPPSPPSPPPPSPPPPPPPSPPPPSPPPPSPSPPPPPASPPP). An O-linked (Gal) serine glycan is attached at Ser160. 4 positions are modified to 4-hydroxyproline: Pro161, Pro162, Pro163, and Pro164. 4 O-linked (Ara...) hydroxyproline glycosylation sites follow: Pro161, Pro162, Pro163, and Pro164. Ser165 is a glycosylation site (O-linked (Gal) serine). Pro166 and Pro167 each carry 4-hydroxyproline. Residues Pro166 and Pro167 are each glycosylated (O-linked (Ara...) hydroxyproline). The O-linked (Gal) serine glycan is linked to Ser168. Pro169, Pro170, Pro171, and Pro172 each carry 4-hydroxyproline. 4 O-linked (Ara...) hydroxyproline glycosylation sites follow: Pro169, Pro170, Pro171, and Pro172. Ser173 carries an O-linked (Gal) serine glycan. 4-hydroxyproline occurs at positions 174, 175, 176, 177, 178, 179, and 180. O-linked (Ara...) hydroxyproline glycosylation is found at Pro174, Pro175, Pro176, Pro177, Pro178, Pro179, and Pro180. The O-linked (Gal) serine glycan is linked to Ser181. Residues Pro182, Pro183, Pro184, and Pro185 each carry the 4-hydroxyproline modification. O-linked (Ara...) hydroxyproline glycans are attached at residues Pro182, Pro183, Pro184, and Pro185. O-linked (Gal) serine glycosylation occurs at Ser186. Pro187, Pro188, Pro189, and Pro190 each carry 4-hydroxyproline. Pro187, Pro188, Pro189, and Pro190 each carry an O-linked (Ara...) hydroxyproline glycan. Ser191 is a glycosylation site (O-linked (Gal) serine). 4-hydroxyproline is present on Pro192. O-linked (Ara...) hydroxyproline glycosylation occurs at Pro192. Ser193 is a glycosylation site (O-linked (Gal) serine). Residues Pro194, Pro195, Pro196, Pro197, and Pro198 each carry the 4-hydroxyproline modification. 5 O-linked (Ara...) hydroxyproline glycosylation sites follow: Pro194, Pro195, Pro196, Pro197, and Pro198. An O-linked (Gal) serine glycan is attached at Ser200. Residues Pro201, Pro202, Pro203, Pro204, Pro205, Pro206, and Pro209 each carry the 4-hydroxyproline modification. O-linked (Ara...) hydroxyproline glycans are attached at residues Pro201, Pro202, Pro203, Pro204, Pro205, Pro206, and Pro209. Chitin-binding type-1 domains follow at residues 210–253 (YPQC…QCPG) and 257–301 (EGRC…QCNT). Intrachain disulfides connect Cys213–Cys229, Cys222–Cys235, Cys228–Cys242, Cys247–Cys251, Cys260–Cys277, Cys269–Cys283, Cys276–Cys290, and Cys295–Cys299. Chitin-binding residues include Ser230, Trp232, Trp234, and Tyr241.

This sequence in the central section; belongs to the extensin family. Homodimer. In terms of processing, heavily glycosylated with beta-arabinose on hydroxyprolines and with alpha-galactose on serines of the extensin-like domain. As no other sugars could be detected in the native lectin, it is unlikely that the three putative N-glycosylation sites are actually glycosylated. The N-terminus is blocked. The N-terminal sequences proposed in PubMed:9022287 and PubMed:11056399 originate probably from truncated proteins.

In terms of biological role, this protein might function as a defense against chitin containing pathogens. Binds to several branched or linear N-acetyllactosamine-containing glycosphingolipids and also to lactosylceramide with sphingosine and non-hydroxy fatty acids. The chain is Chitin-binding lectin 1 from Solanum tuberosum (Potato).